We begin with the raw amino-acid sequence, 94 residues long: Co-chaperonin GroES (94 aa).

Belongs to the GroES chaperonin family. As to quaternary structure, heptamer of 7 subunits arranged in a ring. Interacts with the chaperonin GroEL.

It is found in the cytoplasm. In terms of biological role, together with the chaperonin GroEL, plays an essential role in assisting protein folding. The GroEL-GroES system forms a nano-cage that allows encapsulation of the non-native substrate proteins and provides a physical environment optimized to promote and accelerate protein folding. GroES binds to the apical surface of the GroEL ring, thereby capping the opening of the GroEL channel. This is Co-chaperonin GroES from Ehrlichia ruminantium (strain Gardel).